A 122-amino-acid polypeptide reads, in one-letter code: Large ribosomal subunit protein bL12 (122 aa).

The protein belongs to the bacterial ribosomal protein bL12 family. In terms of assembly, homodimer. Part of the ribosomal stalk of the 50S ribosomal subunit. Forms a multimeric L10(L12)X complex, where L10 forms an elongated spine to which 2 to 4 L12 dimers bind in a sequential fashion. Binds GTP-bound translation factors.

Its function is as follows. Forms part of the ribosomal stalk which helps the ribosome interact with GTP-bound translation factors. Is thus essential for accurate translation. In Staphylococcus epidermidis (strain ATCC 35984 / DSM 28319 / BCRC 17069 / CCUG 31568 / BM 3577 / RP62A), this protein is Large ribosomal subunit protein bL12.